A 527-amino-acid chain; its full sequence is GMP synthase [glutamine-hydrolyzing] (527 aa).

In terms of domain architecture, Glutamine amidotransferase type-1 spans threonine 13–lysine 202. Cysteine 89 acts as the Nucleophile in catalysis. Residues histidine 176 and glutamate 178 contribute to the active site. Residues tryptophan 203 to arginine 402 form the GMPS ATP-PPase domain. Serine 231–threonine 237 lines the ATP pocket. Residues arginine 304, aspartate 464, lysine 519, and glutamate 525 each coordinate XMP.

In terms of assembly, homodimer. Mg(2+) is required as a cofactor.

It is found in the cytoplasm. The protein localises to the cytosol. It carries out the reaction XMP + L-glutamine + ATP + H2O = GMP + L-glutamate + AMP + diphosphate + 2 H(+). It participates in purine metabolism; GMP biosynthesis; GMP from XMP (L-Gln route): step 1/1. Its function is as follows. Catalyzes the conversion of xanthine monophosphate (XMP) to GMP in the presence of glutamine and ATP through an adenyl-XMP intermediate. This is GMP synthase [glutamine-hydrolyzing] (GUA1) from Yarrowia lipolytica (strain CLIB 122 / E 150) (Yeast).